A 372-amino-acid chain; its full sequence is Cytochrome b (372 aa).

Transmembrane regions (helical) follow at residues 25 to 45 (FGSM…FLAI), 69 to 90 (WTMQ…YIHI), 105 to 125 (WLSG…GYVL), and 170 to 190 (FFAL…IHII). Heme b-binding residues include H75 and H89. H174 and H188 together coordinate heme b. An a ubiquinone-binding site is contributed by H193. The next 4 membrane-spanning stretches (helical) occupy residues 218–238 (YKDM…LSFS), 280–300 (LGGT…PFTH), 312–332 (LTQI…WTAT), and 339–358 (FIII…IMNP).

This sequence belongs to the cytochrome b family. The cytochrome bc1 complex contains 3 respiratory subunits (MT-CYB, CYC1 and UQCRFS1), 2 core proteins (UQCRC1 and UQCRC2) and probably 6 low-molecular weight proteins. The cofactor is heme b.

The protein resides in the mitochondrion inner membrane. In terms of biological role, component of the ubiquinol-cytochrome c reductase complex (complex III or cytochrome b-c1 complex) that is part of the mitochondrial respiratory chain. The b-c1 complex mediates electron transfer from ubiquinol to cytochrome c. Contributes to the generation of a proton gradient across the mitochondrial membrane that is then used for ATP synthesis. The chain is Cytochrome b (MT-CYB) from Ophiophagus hannah (King cobra).